The chain runs to 257 residues: Imidazole glycerol phosphate synthase subunit HisF (257 aa).

Residues Asp-11 and Asp-130 contribute to the active site.

This sequence belongs to the HisA/HisF family. Heterodimer of HisH and HisF.

It is found in the cytoplasm. It catalyses the reaction 5-[(5-phospho-1-deoxy-D-ribulos-1-ylimino)methylamino]-1-(5-phospho-beta-D-ribosyl)imidazole-4-carboxamide + L-glutamine = D-erythro-1-(imidazol-4-yl)glycerol 3-phosphate + 5-amino-1-(5-phospho-beta-D-ribosyl)imidazole-4-carboxamide + L-glutamate + H(+). It functions in the pathway amino-acid biosynthesis; L-histidine biosynthesis; L-histidine from 5-phospho-alpha-D-ribose 1-diphosphate: step 5/9. Its function is as follows. IGPS catalyzes the conversion of PRFAR and glutamine to IGP, AICAR and glutamate. The HisF subunit catalyzes the cyclization activity that produces IGP and AICAR from PRFAR using the ammonia provided by the HisH subunit. The sequence is that of Imidazole glycerol phosphate synthase subunit HisF from Aliivibrio fischeri (strain MJ11) (Vibrio fischeri).